We begin with the raw amino-acid sequence, 332 residues long: Small ribosomal subunit biogenesis GTPase RsgA (332 aa).

Residues 103 to 259 (RQQLIAANLD…LIDTPGMREL (157 aa)) enclose the CP-type G domain. Residues 148–151 (TKVD) and 201–209 (GSSGAGKST) contribute to the GTP site. Residues Cys-281, Cys-286, His-288, and Cys-294 each coordinate Zn(2+).

This sequence belongs to the TRAFAC class YlqF/YawG GTPase family. RsgA subfamily. In terms of assembly, monomer. Associates with 30S ribosomal subunit, binds 16S rRNA. Zn(2+) is required as a cofactor.

The protein resides in the cytoplasm. In terms of biological role, one of several proteins that assist in the late maturation steps of the functional core of the 30S ribosomal subunit. Helps release RbfA from mature subunits. May play a role in the assembly of ribosomal proteins into the subunit. Circularly permuted GTPase that catalyzes slow GTP hydrolysis, GTPase activity is stimulated by the 30S ribosomal subunit. The chain is Small ribosomal subunit biogenesis GTPase RsgA from Xylella fastidiosa (strain M12).